We begin with the raw amino-acid sequence, 283 residues long: Formamidopyrimidine-DNA glycosylase (283 aa).

Residue proline 2 is the Schiff-base intermediate with DNA of the active site. The active-site Proton donor is the glutamate 3. Lysine 58 serves as the catalytic Proton donor; for beta-elimination activity. The DNA site is built by histidine 100, arginine 119, and arginine 162. The FPG-type zinc-finger motif lies at 247 to 283 (DVYGREGEPCRRAGCTGTVTRITQSGRSSFYCGKCQR). The active-site Proton donor; for delta-elimination activity is arginine 273.

The protein belongs to the FPG family. In terms of assembly, monomer. It depends on Zn(2+) as a cofactor.

The catalysed reaction is Hydrolysis of DNA containing ring-opened 7-methylguanine residues, releasing 2,6-diamino-4-hydroxy-5-(N-methyl)formamidopyrimidine.. The enzyme catalyses 2'-deoxyribonucleotide-(2'-deoxyribose 5'-phosphate)-2'-deoxyribonucleotide-DNA = a 3'-end 2'-deoxyribonucleotide-(2,3-dehydro-2,3-deoxyribose 5'-phosphate)-DNA + a 5'-end 5'-phospho-2'-deoxyribonucleoside-DNA + H(+). Its function is as follows. Involved in base excision repair of DNA damaged by oxidation or by mutagenic agents. Acts as a DNA glycosylase that recognizes and removes damaged bases. Has a preference for oxidized purines, such as 7,8-dihydro-8-oxoguanine (8-oxoG). Has AP (apurinic/apyrimidinic) lyase activity and introduces nicks in the DNA strand. Cleaves the DNA backbone by beta-delta elimination to generate a single-strand break at the site of the removed base with both 3'- and 5'-phosphates. The sequence is that of Formamidopyrimidine-DNA glycosylase from Ruegeria sp. (strain TM1040) (Silicibacter sp.).